Consider the following 296-residue polypeptide: Ribosomal RNA small subunit methyltransferase A (296 aa).

S-adenosyl-L-methionine-binding residues include Asn32, Leu34, Gly59, Glu80, Asp105, and Asn130.

This sequence belongs to the class I-like SAM-binding methyltransferase superfamily. rRNA adenine N(6)-methyltransferase family. RsmA subfamily.

The protein localises to the cytoplasm. The catalysed reaction is adenosine(1518)/adenosine(1519) in 16S rRNA + 4 S-adenosyl-L-methionine = N(6)-dimethyladenosine(1518)/N(6)-dimethyladenosine(1519) in 16S rRNA + 4 S-adenosyl-L-homocysteine + 4 H(+). Specifically dimethylates two adjacent adenosines (A1518 and A1519) in the loop of a conserved hairpin near the 3'-end of 16S rRNA in the 30S particle. May play a critical role in biogenesis of 30S subunits. This is Ribosomal RNA small subunit methyltransferase A from Levilactobacillus brevis (strain ATCC 367 / BCRC 12310 / CIP 105137 / JCM 1170 / LMG 11437 / NCIMB 947 / NCTC 947) (Lactobacillus brevis).